We begin with the raw amino-acid sequence, 394 residues long: MSKEKFERTKPHVNVGTIGHVDHGKTTLTAAITTVLAKTYGGSARAFDQIDNAPEEKARGITINTSHVEYDTPTRHYAHVDCPGHADYVKNMITGAAQMDGAILVVAATDGPMPQTREHILLGRQVGVPYIIVFLNKCDMVDDEELLELVEMEVRELLSQYDFPGDDTPIVRGSALKALEGDAEWEAKIIELAGHLDSYIPEPERAIDKPFLLPIEDVFSISGRGTVVTGRVERGIIKVGEEVEIVGIKDTAKSTCTGVEMFRKLLDEGRAGENVGVLLRGIKREEIERGQVLAKPGSIKPHTKFESEVYILSKDEGGRHTPFFKGYRPQFYFRTTDVTGTIELPEGVEMVMPGDNIKMVVTLIHPIAMDDGLRFAIREGGRTVGAGVVAKVLG.

One can recognise a tr-type G domain in the interval K10 to E204. Residues G19–T26 are G1. G19–T26 contributes to the GTP binding site. Position 26 (T26) interacts with Mg(2+). A G2 region spans residues G60–N64. The tract at residues D81–G84 is G3. Residues D81–H85 and N136–D139 contribute to the GTP site. Residues N136 to D139 are G4. The interval S174–L176 is G5.

Belongs to the TRAFAC class translation factor GTPase superfamily. Classic translation factor GTPase family. EF-Tu/EF-1A subfamily. In terms of assembly, monomer.

It localises to the cytoplasm. It catalyses the reaction GTP + H2O = GDP + phosphate + H(+). Functionally, GTP hydrolase that promotes the GTP-dependent binding of aminoacyl-tRNA to the A-site of ribosomes during protein biosynthesis. This chain is Elongation factor Tu, found in Cronobacter sakazakii (strain ATCC BAA-894) (Enterobacter sakazakii).